The chain runs to 179 residues: Large ribosomal subunit protein uL5 (179 aa).

It belongs to the universal ribosomal protein uL5 family. As to quaternary structure, part of the 50S ribosomal subunit; part of the 5S rRNA/L5/L18/L25 subcomplex. Contacts the 5S rRNA and the P site tRNA. Forms a bridge to the 30S subunit in the 70S ribosome.

Its function is as follows. This is one of the proteins that bind and probably mediate the attachment of the 5S RNA into the large ribosomal subunit, where it forms part of the central protuberance. In the 70S ribosome it contacts protein S13 of the 30S subunit (bridge B1b), connecting the 2 subunits; this bridge is implicated in subunit movement. Contacts the P site tRNA; the 5S rRNA and some of its associated proteins might help stabilize positioning of ribosome-bound tRNAs. This chain is Large ribosomal subunit protein uL5, found in Dictyoglomus turgidum (strain DSM 6724 / Z-1310).